The chain runs to 425 residues: Alpha/beta hydrolase xenA (425 aa).

Asp366 is an active-site residue.

The protein belongs to the AB hydrolase superfamily. FUS2 hydrolase family. Homodimer.

It participates in mycotoxin biosynthesis. Functionally, alpha/beta hydrolase; part of the gene cluster that mediates the biosynthesis of xenoacremones such as xenoacremone A, a compound that shows inhibitory activity toward the PI3K/AKT signaling pathway and which has the ability to induce apoptosis of A549 lung cancer cells. Within the pathway, cooperation of the hybrid PKS-NRPS xenE and the trans-acting enoyl reductase xenG is responsible for the formation of the reduced tyrosine-nonaketide derivative. The alpha/beta hydrolase xenA then accelerates intramolecular nucleophilic attack to give a pyrrolidone derivative. Subsequently, three enzymes, xenF, xenD, and xenC, coordinately participate in the conversion to xenoacremone B. XenF catalyzes sigmatropic rearrangement to form an A-ring, which leads to an unusual intermediate with a hexane ring, which is required for the formation of the tricarbocyclic product. Epoxidation catalyzed by xenD and the formation of the paracyclophane ether catalyzed by xenC initiate a spontaneous intramolecular Diels-Alder (IMDA) reaction to yield xenoacremone B. Spontaneous hydration of xenoacremone B leads to the formation of xenoacremone A, which undergoes subsequent methylation to afford xenoacremone C. The protein is Alpha/beta hydrolase xenA of Xenoacremonium sinensis (Endophyte fungus).